An 800-amino-acid polypeptide reads, in one-letter code: Phenylalanine--tRNA ligase beta subunit (800 aa).

Residues 39 to 154 (TKDIKNLVVG…ESQVPGTDAL (116 aa)) enclose the tRNA-binding domain. Residues 408-483 (AFITPIDITA…RIYGYDDIPS (76 aa)) enclose the B5 domain. 4 residues coordinate Mg(2+): Asp-461, Asp-467, Glu-470, and Glu-471. An FDX-ACB domain is found at 708–800 (PRFPGMSRDI…ALIEQGAVIR (93 aa)).

This sequence belongs to the phenylalanyl-tRNA synthetase beta subunit family. Type 1 subfamily. In terms of assembly, tetramer of two alpha and two beta subunits. Mg(2+) is required as a cofactor.

The protein resides in the cytoplasm. It carries out the reaction tRNA(Phe) + L-phenylalanine + ATP = L-phenylalanyl-tRNA(Phe) + AMP + diphosphate + H(+). The sequence is that of Phenylalanine--tRNA ligase beta subunit from Staphylococcus aureus (strain MRSA252).